The chain runs to 205 residues: Large ribosomal subunit protein uL18 (205 aa).

It belongs to the universal ribosomal protein uL18 family. In terms of assembly, part of the 50S ribosomal subunit. Contacts the 5S and 23S rRNAs.

Its function is as follows. This is one of the proteins that bind and probably mediate the attachment of the 5S RNA into the large ribosomal subunit, where it forms part of the central protuberance. The sequence is that of Large ribosomal subunit protein uL18 from Pyrobaculum islandicum (strain DSM 4184 / JCM 9189 / GEO3).